The sequence spans 93 residues: Phosphoribosyl-ATP pyrophosphatase (93 aa).

Belongs to the PRA-PH family.

The protein resides in the cytoplasm. It catalyses the reaction 1-(5-phospho-beta-D-ribosyl)-ATP + H2O = 1-(5-phospho-beta-D-ribosyl)-5'-AMP + diphosphate + H(+). The protein operates within amino-acid biosynthesis; L-histidine biosynthesis; L-histidine from 5-phospho-alpha-D-ribose 1-diphosphate: step 2/9. In Rhodococcus erythropolis (strain PR4 / NBRC 100887), this protein is Phosphoribosyl-ATP pyrophosphatase.